The primary structure comprises 205 residues: Probable GTP-binding protein EngB (205 aa).

The region spanning 8-195 is the EngB-type G domain; sequence RDAEVVLIGR…NEAVRHHLHE (188 aa). GTP is bound by residues 16 to 23, 41 to 45, 60 to 63, 140 to 143, and 175 to 177; these read GRSNVGKS, GVTRS, DLPG, NKMD, and ISA. Residues Ser-23 and Thr-43 each coordinate Mg(2+).

It belongs to the TRAFAC class TrmE-Era-EngA-EngB-Septin-like GTPase superfamily. EngB GTPase family. Requires Mg(2+) as cofactor.

Its function is as follows. Necessary for normal cell division and for the maintenance of normal septation. The sequence is that of Probable GTP-binding protein EngB from Haloarcula marismortui (strain ATCC 43049 / DSM 3752 / JCM 8966 / VKM B-1809) (Halobacterium marismortui).